A 420-amino-acid chain; its full sequence is Sodium-dependent phosphate transport protein 4 (420 aa).

The tract at residues methionine 1–glutamine 21 is disordered. 4 N-linked (GlcNAc...) asparagine glycosylation sites follow: asparagine 49, asparagine 60, asparagine 68, and asparagine 77. The next 8 helical transmembrane spans lie at serine 126–isoleucine 146, phenylalanine 154–isoleucine 174, isoleucine 218–tyrosine 238, leucine 256–alanine 276, isoleucine 292–glycine 314, threonine 319–leucine 341, glycine 357–aspartate 377, and valine 385–glutamate 405.

This sequence belongs to the major facilitator superfamily. Sodium/anion cotransporter family. In terms of tissue distribution, expressed in the liver and kidney. It is detected in proximal tubules in renal cortex as well as some tubules and glomeruli, with highest expression at the apical side of proximal tubules (at protein level).

The protein localises to the endoplasmic reticulum membrane. It localises to the cell membrane. The enzyme catalyses urate(in) + Na(+)(out) = urate(out) + Na(+)(in). Its function is as follows. Transports organic anions in a voltage-driven, multispecific, manner, on the apical side of renal proximal tubule. In particular, participates in the secretion of urate from the cell into the lumen. Urate is the end product of purine metabolism. May have roles in the metabolism and secretion of estrone sulfate, estradiol-17-beta-glucuronide, ochratoxin A, as wells as drugs such as bumetanide. This chain is Sodium-dependent phosphate transport protein 4 (SLC17A3), found in Homo sapiens (Human).